The chain runs to 166 residues: Regulator of ribonuclease activity A (166 aa).

It belongs to the RraA family. As to quaternary structure, homotrimer. Binds to both RNA-binding sites in the C-terminal region of Rne and to RhlB.

The protein localises to the cytoplasm. Functionally, globally modulates RNA abundance by binding to RNase E (Rne) and regulating its endonucleolytic activity. Can modulate Rne action in a substrate-dependent manner by altering the composition of the degradosome. Modulates RNA-binding and helicase activities of the degradosome. The chain is Regulator of ribonuclease activity A from Actinobacillus succinogenes (strain ATCC 55618 / DSM 22257 / CCUG 43843 / 130Z).